The primary structure comprises 518 residues: Equilibrative nucleoside transporter 4 (518 aa).

Positions 1–10 (MGSKGAERRK) are enriched in basic and acidic residues. A disordered region spans residues 1-21 (MGSKGAERRKQATPGQTPEGN). The Extracellular segment spans residues 1–66 (MGSKGAERRK…EEAVPDDRYH (66 aa)). Residues 67–87 (GIYFAMLLAGVGFLLPYNSFI) form a helical membrane-spanning segment. Over 88 to 99 (TDVDYLHHKFEG) the chain is Cytoplasmic. The chain crosses the membrane as a helical span at residues 100–120 (TSIVFDMGLTYILVALVAVIL). Residues 121-133 (NNVLVEMLSLHTR) lie on the Extracellular side of the membrane. The helical transmembrane segment at 134–154 (ITVGYLFALGPLLFVTIFDVW) threads the bilayer. The Cytoplasmic segment spans residues 155–157 (LER). A helical membrane pass occupies residues 158-178 (FTIKQAYVINLMSMGTVAFGC). Residues 179–198 (TVQQSSFYGYMGMLPKRYTQ) are Extracellular-facing. A helical transmembrane segment spans residues 199-218 (GVMTGESTAGVIISLSRIFT). At 219 to 229 (KLLIKDERKNT) the chain is on the cytoplasmic side. Residues 230–250 (IIFFVISICMVLVCFILHLLV) form a helical membrane-spanning segment. Over 251-342 (RRTRFVQYYT…MILHRYVVAR (92 aa)) the chain is Extracellular. Residues 343–363 (VIWTYMLSIAVTYFITLCLFP) form a helical membrane-spanning segment. Residues 364–376 (GLESEIKNATLGE) lie on the Cytoplasmic side of the membrane. The chain crosses the membrane as a helical span at residues 377-397 (WLPILIMAIFNISDFVGKILA). Residues 398 to 407 (AVPYEWNGTR) are Extracellular-facing. The chain crosses the membrane as a helical span at residues 408–428 (LLFFSCVRVVFIPLFIMCVYP). The Cytoplasmic portion of the chain corresponds to 429-439 (AQMPMFSHPAW). A helical membrane pass occupies residues 440 to 460 (PCIFSLFMGITNGYFGSVPMI). Topologically, residues 461 to 476 (HAAGKVAPEQRELAGN) are extracellular. A helical transmembrane segment spans residues 477–497 (IMTVSYMSGLMLGSVVAYAAY). Topologically, residues 498 to 518 (SFTASGSSFHSQTGYNFTQGY) are cytoplasmic.

It belongs to the SLC29A/ENT transporter (TC 2.A.57) family.

Its subcellular location is the membrane. Functions as a polyspecific organic cation transporter, efficiently transporting many organic cations such as monoamine neurotransmitters 1-methyl-4-phenylpyridinium and biogenic amines including serotonin, dopamine, norepinephrine and epinephrine. May play a role in regulating central nervous system homeostasis of monoamine neurotransmitters. May be involved in luminal transport of organic cations in the kidney and seems to use luminal proton gradient to drive organic cation reabsorption. Does not seem to transport nucleoside and nucleoside analogs such as uridine, cytidine, thymidine, adenosine, inosine, guanosine, and azidothymidine. The polypeptide is Equilibrative nucleoside transporter 4 (slc29a4) (Danio rerio (Zebrafish)).